Consider the following 235-residue polypeptide: Ribosomal RNA-processing protein 17 (235 aa).

Residues 49–110 (QRQKKAQEFI…AKNDKTEDLQ (62 aa)) adopt a coiled-coil conformation. The span at 99 to 108 (EDAKNDKTED) shows a compositional bias: basic and acidic residues. Disordered regions lie at residues 99–138 (EDAK…SVKP) and 209–235 (RVKK…KRRR). S113, S116, and S122 each carry phosphoserine. Residues 217-235 (TKNERRINQRKANDNKRRR) are compositionally biased toward basic and acidic residues.

The protein belongs to the RRP17 family.

Its subcellular location is the nucleus. The protein resides in the nucleolus. In terms of biological role, essential protein involved in ribosomal RNA processing. The protein is Ribosomal RNA-processing protein 17 (RRP17) of Saccharomyces cerevisiae (strain ATCC 204508 / S288c) (Baker's yeast).